A 153-amino-acid polypeptide reads, in one-letter code: IAA acetyltransferase (153 aa).

In terms of domain architecture, N-acetyltransferase spans 4-153 (VTIARESPLQ…PLSLFMEKPL (150 aa)).

Functionally, participates in the tryptophan-dependent indole-3-acetic acid production, which is a phytohormone released by A.brasilense. The sequence is that of IAA acetyltransferase from Azospirillum brasilense.